The following is a 666-amino-acid chain: Probable potassium transport system protein Kup (666 aa).

12 consecutive transmembrane segments (helical) span residues 53-73, 89-109, 144-164, 181-201, 212-232, 247-267, 291-311, 324-344, 381-401, 411-431, 441-461, and 463-483; these read FWAL…TSPL, VTPV…FIVV, LLLL…SMIT, PEFG…LFAV, AFAP…ALHI, AIHF…LVFL, WFCL…ALIL, LAPA…TVIA, IYLP…VLLF, YGIA…VVVW, AAAL…ANLL, and LLDG…LIWT.

The protein belongs to the HAK/KUP transporter (TC 2.A.72) family.

The protein localises to the cell inner membrane. The catalysed reaction is K(+)(in) + H(+)(in) = K(+)(out) + H(+)(out). Functionally, transport of potassium into the cell. Likely operates as a K(+):H(+) symporter. This is Probable potassium transport system protein Kup from Nitrobacter hamburgensis (strain DSM 10229 / NCIMB 13809 / X14).